We begin with the raw amino-acid sequence, 349 residues long: UDP-N-acetylenolpyruvoylglucosamine reductase (349 aa).

The region spanning 25 to 197 (GIAATARYAA…VAVTFRLPKR (173 aa)) is the FAD-binding PCMH-type domain. The active site involves Arg173. Ser249 (proton donor) is an active-site residue. The active site involves Glu345.

Belongs to the MurB family. Requires FAD as cofactor.

Its subcellular location is the cytoplasm. It carries out the reaction UDP-N-acetyl-alpha-D-muramate + NADP(+) = UDP-N-acetyl-3-O-(1-carboxyvinyl)-alpha-D-glucosamine + NADPH + H(+). The protein operates within cell wall biogenesis; peptidoglycan biosynthesis. Cell wall formation. In Burkholderia vietnamiensis (strain G4 / LMG 22486) (Burkholderia cepacia (strain R1808)), this protein is UDP-N-acetylenolpyruvoylglucosamine reductase.